The chain runs to 219 residues: 7-cyano-7-deazaguanine synthase (219 aa).

10 to 20 is a binding site for ATP; the sequence is FSGGQDSTTCL. The Zn(2+) site is built by Cys-187, Cys-196, Cys-199, and Cys-202.

This sequence belongs to the QueC family. Homodimer. Requires Zn(2+) as cofactor.

It carries out the reaction 7-carboxy-7-deazaguanine + NH4(+) + ATP = 7-cyano-7-deazaguanine + ADP + phosphate + H2O + H(+). It participates in purine metabolism; 7-cyano-7-deazaguanine biosynthesis. Functionally, catalyzes the ATP-dependent conversion of 7-carboxy-7-deazaguanine (CDG) to 7-cyano-7-deazaguanine (preQ(0)). This Lysinibacillus sphaericus (strain C3-41) protein is 7-cyano-7-deazaguanine synthase.